A 712-amino-acid chain; its full sequence is Serrate RNA effector molecule homolog (712 aa).

3 disordered regions span residues 1 to 80, 214 to 256, and 620 to 712; these read MVDS…DSIY, ADIK…TEKS, and QRPV…DDIP. 2 stretches are compositionally biased toward basic and acidic residues: residues 8-26 and 34-54; these read GDRR…DYRR and YDNK…SRGD. Over residues 65–79 the composition is skewed to polar residues; that stretch reads RSGNGSDLPTESDSI. Basic and acidic residues predominate over residues 214-236; sequence ADIKKDENGNGTEQPKEEPEVKQ. Residues 240-251 show a composition bias toward acidic residues; sequence ATEELEEGAIED. 2 stretches are compositionally biased toward basic and acidic residues: residues 621–637 and 645–655; these read RPVD…DHRG and GYGRERDDDRG. Residues 656 to 668 show a composition bias toward gly residues; the sequence is PGGGGRNSFGGGG.

It belongs to the ARS2 family.

Its subcellular location is the nucleus. Acts as a mediator between the cap-binding complex (CBC) and the primary microRNAs (miRNAs) processing machinery. Contributes to the stability and delivery of capped primary miRNA transcripts to the primary miRNA processing complex, thereby playing a role in RNA-mediated gene silencing (RNAi) by miRNAs. The protein is Serrate RNA effector molecule homolog of Caenorhabditis elegans.